The sequence spans 917 residues: Outer membrane protein SlpA (917 aa).

Residues 1-23 form the signal peptide; the sequence is MKKRLVTLLAGLLTVLSMGFGLA. Residues 24–84 enclose the SLH domain; that stretch reads QFSDVPAGHW…QQIEEELKTQ (61 aa).

In terms of assembly, homotrimer.

The protein resides in the cell outer membrane. Plays an important role in the structural organization and integrity of the cell envelope, bridging the outer membrane to the peptidoglyan layer. Appears to be a nonselective channel. In Thermus thermophilus (strain ATCC 27634 / DSM 579 / HB8), this protein is Outer membrane protein SlpA (slpA).